The sequence spans 130 residues: Small ribosomal subunit protein uS11 (130 aa).

The protein belongs to the universal ribosomal protein uS11 family. Part of the 30S ribosomal subunit. Interacts with proteins S7 and S18. Binds to IF-3.

Located on the platform of the 30S subunit, it bridges several disparate RNA helices of the 16S rRNA. Forms part of the Shine-Dalgarno cleft in the 70S ribosome. The sequence is that of Small ribosomal subunit protein uS11 from Xylella fastidiosa (strain 9a5c).